Reading from the N-terminus, the 287-residue chain is ATP synthase gamma chain (287 aa).

The protein belongs to the ATPase gamma chain family. As to quaternary structure, F-type ATPases have 2 components, CF(1) - the catalytic core - and CF(0) - the membrane proton channel. CF(1) has five subunits: alpha(3), beta(3), gamma(1), delta(1), epsilon(1). CF(0) has three main subunits: a, b and c.

The protein resides in the cell inner membrane. Functionally, produces ATP from ADP in the presence of a proton gradient across the membrane. The gamma chain is believed to be important in regulating ATPase activity and the flow of protons through the CF(0) complex. The protein is ATP synthase gamma chain of Ruthia magnifica subsp. Calyptogena magnifica.